The primary structure comprises 1052 residues: Kinesin-like protein KIF11 (1052 aa).

The 342-residue stretch at 17–358 (NIQVVVRCRP…LEYAHRAKNI (342 aa)) folds into the Kinesin motor domain. 104–111 (GQTGTGKT) is an ATP binding site. An N6-acetyllysine modification is found at Lys-145. A coiled-coil region spans residues 364–478 (VNQKLTKKAL…ETKLQLVKEE (115 aa)). A Phosphothreonine modification is found at Thr-457. A Glycyl lysine isopeptide (Lys-Gly) (interchain with G-Cter in SUMO2) cross-link involves residue Lys-476. Thr-925 is subject to Phosphothreonine. 2 disordered regions span residues 950–1026 (LQKK…LNPV) and 1033–1052 (EASD…SINL). Positions 963 to 988 (EASKETSQDMDEEREALEQCTEELVS) form a coiled coil. The segment covering 1016-1026 (KDKENRGLNPV) has biased composition (basic and acidic residues).

Belongs to the TRAFAC class myosin-kinesin ATPase superfamily. Kinesin family. BimC subfamily. Interacts with the thyroid hormone receptor in the presence of thyroid hormone. Component of a large chromatin remodeling complex, at least composed of MYSM1, PCAF, RBM10 and KIF11/TRIP5. Interacts with RARRES1 and AGBL2. Phosphorylated exclusively on serine during S phase, but on both serine and Thr-925 during mitosis, so controlling the association of KIF11 with the spindle apparatus (probably during early prophase).

The protein resides in the cytoplasm. The protein localises to the cytoskeleton. It is found in the spindle pole. Its function is as follows. Motor protein required for establishing a bipolar spindle during mitosis. Required in non-mitotic cells for transport of secretory proteins from the Golgi complex to the cell surface. This is Kinesin-like protein KIF11 (Kif11) from Mus musculus (Mouse).